We begin with the raw amino-acid sequence, 805 residues long: Pentatricopeptide repeat-containing protein At4g01570 (805 aa).

16 PPR repeats span residues 91 to 125 (SATA…GVNL), 126 to 160 (DQTM…GDCL), 161 to 196 (NPSV…DNHS), 211 to 241 (GTVA…LKGM), 247 to 277 (DTWS…MKER), 288 to 322 (DICT…GHEP), 323 to 357 (DNST…GFVP), 358 to 392 (DTIV…GVRA), 393 to 427 (SCWT…GQFV), 428 to 462 (DAIT…GFSV), 463 to 497 (DLVT…NLVP), 593 to 627 (DVDM…GVTD), 629 to 663 (TSYT…FCAA), 664 to 698 (DIAT…GGYL), 699 to 733 (DIVM…GINP), and 734 to 768 (DVVS…GCLP).

This sequence belongs to the PPR family. P subfamily.

In Arabidopsis thaliana (Mouse-ear cress), this protein is Pentatricopeptide repeat-containing protein At4g01570.